Reading from the N-terminus, the 136-residue chain is Large ribosomal subunit protein uL16 (136 aa).

This sequence belongs to the universal ribosomal protein uL16 family. In terms of assembly, part of the 50S ribosomal subunit.

Binds 23S rRNA and is also seen to make contacts with the A and possibly P site tRNAs. This Proteus mirabilis (strain HI4320) protein is Large ribosomal subunit protein uL16.